We begin with the raw amino-acid sequence, 435 residues long: Methylenetetrahydrofolate--tRNA-(uracil-5-)-methyltransferase TrmFO (435 aa).

9–14 (GAGLAG) contacts FAD.

Belongs to the MnmG family. TrmFO subfamily. The cofactor is FAD.

Its subcellular location is the cytoplasm. The catalysed reaction is uridine(54) in tRNA + (6R)-5,10-methylene-5,6,7,8-tetrahydrofolate + NADH + H(+) = 5-methyluridine(54) in tRNA + (6S)-5,6,7,8-tetrahydrofolate + NAD(+). The enzyme catalyses uridine(54) in tRNA + (6R)-5,10-methylene-5,6,7,8-tetrahydrofolate + NADPH + H(+) = 5-methyluridine(54) in tRNA + (6S)-5,6,7,8-tetrahydrofolate + NADP(+). Its function is as follows. Catalyzes the folate-dependent formation of 5-methyl-uridine at position 54 (M-5-U54) in all tRNAs. The protein is Methylenetetrahydrofolate--tRNA-(uracil-5-)-methyltransferase TrmFO of Staphylococcus aureus (strain MRSA252).